The sequence spans 92 residues: Small ribosomal subunit protein uS19c (92 aa).

It belongs to the universal ribosomal protein uS19 family.

The protein resides in the plastid. The protein localises to the chloroplast. In terms of biological role, protein S19 forms a complex with S13 that binds strongly to the 16S ribosomal RNA. This Cyanidium caldarium (Red alga) protein is Small ribosomal subunit protein uS19c.